The chain runs to 200 residues: AP-5 complex subunit sigma-1 (200 aa).

As to quaternary structure, probably part of the adaptor protein complex 5 (AP-5) a tetramer composed of AP5B1, AP5M1, AP5S1 and AP5Z1. Interacts with ZFYVE26 and SPG11.

The protein resides in the cytoplasm. It is found in the cytosol. It localises to the late endosome membrane. The protein localises to the lysosome membrane. As part of AP-5, a probable fifth adaptor protein complex it may be involved in endosomal transport. According to PubMed:20613862, it is required for efficient homologous recombination DNA double-strand break repair. In Homo sapiens (Human), this protein is AP-5 complex subunit sigma-1 (AP5S1).